We begin with the raw amino-acid sequence, 347 residues long: GMP reductase (347 aa).

Position 108 to 131 (108 to 131 (ADFEKTKQILDLNPALNFVCIDVA)) interacts with NADP(+). K(+) contacts are provided by Gly181 and Gly183. Cys186 serves as the catalytic Thioimidate intermediate. 216-239 (IISDGGCTTPGDVAKAFGGGADFV) contributes to the NADP(+) binding site.

Belongs to the IMPDH/GMPR family. GuaC type 1 subfamily. In terms of assembly, homotetramer.

The catalysed reaction is IMP + NH4(+) + NADP(+) = GMP + NADPH + 2 H(+). Its function is as follows. Catalyzes the irreversible NADPH-dependent deamination of GMP to IMP. It functions in the conversion of nucleobase, nucleoside and nucleotide derivatives of G to A nucleotides, and in maintaining the intracellular balance of A and G nucleotides. The polypeptide is GMP reductase (Escherichia coli O157:H7).